A 458-amino-acid polypeptide reads, in one-letter code: 5-hydroxytryptamine receptor 2C (458 aa).

The first 32 residues, 1 to 32 (MVNLRKAVHSFLVHLIGLLVWQCDISVSPVAA), serve as a signal peptide directing secretion. Residues 33 to 55 (LVTDIFNTSDGGRFKFPDGVQNW) are Extracellular-facing. A helical membrane pass occupies residues 56–80 (PALSIVIIIILTIGGNILVIMAVSL). Residues 81–86 (EKKLHN) are Cytoplasmic-facing. A helical transmembrane segment spans residues 87–111 (ATNYFLMSLAIADMLVGLLVMPLSL). Residues 112-128 (LAILYDYVWPLPRYLCP) lie on the Extracellular side of the membrane. A disulfide bond links C127 and C207. The chain crosses the membrane as a helical span at residues 129–151 (VWISLDVLFSTASIMHLCAISLD). Ergotamine is bound at residue T139. Residues 151–153 (DRY) carry the DRY motif; important for ligand-induced conformation changes motif. Over 152 to 167 (RYVAIRNPVEHSRFNS) the chain is Cytoplasmic. Residues 168 to 189 (RTKAIMKIAIVWAISIGVSVPI) form a helical membrane-spanning segment. The Extracellular segment spans residues 190–213 (PVIGLRDEEKVFVNNTTCVLNDPN). N203 and N204 each carry an N-linked (GlcNAc...) asparagine glycan. L209 contributes to the ergotamine binding site. Residues 214–236 (FVLIGSFVAFFIPLTIMVITYCL) traverse the membrane as a helical segment. Over 237–311 (TIHVLRRQAL…AINNERKASK (75 aa)) the chain is Cytoplasmic. Residues 272 to 301 (TEEENSANPNQDSNPRRRKKKERRPRGTMQ) are disordered. Over residues 287–297 (RRRKKKERRPR) the composition is skewed to basic residues. Residues 312–336 (VLGIVFFVFLVMWCPFFITNILSVL) form a helical membrane-spanning segment. The cysteines at positions 337 and 341 are disulfide-linked. Topologically, residues 337 to 347 (CGKACNQKLME) are extracellular. The helical transmembrane segment at 348–370 (KLLNVFVWIGYVCSGINPLVYTL) threads the bilayer. Positions 364–368 (NPLVY) match the NPxxY motif; important for ligand-induced conformation changes and signaling motif. The Cytoplasmic segment spans residues 371–458 (FNKIYRRAFS…SVVSERISSV (88 aa)). The PDZ-binding signature appears at 456 to 458 (SSV).

It belongs to the G-protein coupled receptor 1 family. In terms of assembly, interacts with MPDZ. Interacts with ARRB2. Interacts with MPP3; this interaction stabilizes the receptor at the plasma membrane and prevents the desensitization of the HTR2C receptor-mediated calcium response.

Its subcellular location is the cell membrane. Functionally, G-protein coupled receptor for 5-hydroxytryptamine (serotonin). Also functions as a receptor for various drugs and psychoactive substances, including ergot alkaloid derivatives, 1-2,5,-dimethoxy-4-iodophenyl-2-aminopropane (DOI) and lysergic acid diethylamide (LSD). Ligand binding causes a conformation change that triggers signaling via guanine nucleotide-binding proteins (G proteins) and modulates the activity of downstream effectors. HTR2C is coupled to G(q)/G(11) G alpha proteins and activates phospholipase C-beta, releasing diacylglycerol (DAG) and inositol 1,4,5-trisphosphate (IP3) second messengers that modulate the activity of phosphatidylinositol 3-kinase and promote the release of Ca(2+) ions from intracellular stores, respectively. Beta-arrestin family members inhibit signaling via G proteins and mediate activation of alternative signaling pathways. Regulates neuronal activity via the activation of short transient receptor potential calcium channels in the brain, and thereby modulates the activation of pro-opiomelanocortin neurons and the release of CRH that then regulates the release of corticosterone. Plays a role in the regulation of appetite and eating behavior, responses to anxiogenic stimuli and stress. Plays a role in insulin sensitivity and glucose homeostasis. This Canis lupus familiaris (Dog) protein is 5-hydroxytryptamine receptor 2C.